Here is a 62-residue protein sequence, read N- to C-terminus: Large ribosomal subunit protein bL28 (62 aa).

This sequence belongs to the bacterial ribosomal protein bL28 family.

The sequence is that of Large ribosomal subunit protein bL28 from Wolinella succinogenes (strain ATCC 29543 / DSM 1740 / CCUG 13145 / JCM 31913 / LMG 7466 / NCTC 11488 / FDC 602W) (Vibrio succinogenes).